A 264-amino-acid polypeptide reads, in one-letter code: Short chain dehydrogenase CPUR_05429 (264 aa).

I24, D70, N97, and R130 together coordinate NADP(+). Active-site proton donor residues include S146 and S147. Positions 161, 165, and 196 each coordinate NADP(+). The active-site Proton acceptor is the Y161. K165 acts as the Lowers pKa of active site Tyr in catalysis.

Belongs to the short-chain dehydrogenases/reductases (SDR) family.

The protein operates within pigment biosynthesis. Functionally, short chain dehydrogenase; part of the ergochrome gene cluster responsible for the typical purple-black color of the ergot sclerotia. The ergochrome gene cluster produces several ergot pigments including the yellow ergochrome secalonic acid and its derivatives, as well as the red anthraquinones endocrocin and clavorubin. The pathway begins with the synthesis of atrochrysone thioester by the polyketide synthase (PKS) CPUR_05437. The atrochrysone carboxyl ACP thioesterase CPUR_05436 then breaks the thioester bond and releases the atrochrysone carboxylic acid from CPUR_05437. The atrochrysone carboxylic acid is then converted to atrochrysone which is further transformed into emodin anthrone. The next step is performed by the anthrone oxygenase CPUR_05434 that catalyzes the oxidation of emodinanthrone to emodin. Emodin is further modified to yield monodictyphenone via several steps involving CPUR_05427, CPUR_05428, CPUR_05429 and CPUR_05430. The short chain dehydrogenase/reductase CPUR_05418 then catalyzes the C-5 ketoreduction to give the xanthone skeleton of the monomeric units. Ergochromes formation requires further dimerization steps of different xanthone units, probably catalyzed by the cytochrome P450 monooxygenase CPUR_05419. CPUR_05425, CPUR_05426 and CPUR_05431 are unique to Claviceps, thus it is likely that they are involved in further modification of xanthone units or in their dimerization. The yellow ergochromes and the red anthraquinone pigments endocrocin and clavorubin are products from the same PKS derived precursors and the latter are likely shunt products in the pathway of xanthone biosynthesis. It is proposed that atrochrysone carboxylic acid released from the PKS CPUR_05437 can also be converted to endocrocin anthrone which is further oxidized into endocrocin by CPUR_05435. Endocrocin could be then modified to clavorubin, possibly by CPUR_05423 and CPUR_05431. Clavorubin is the principal anthraquinone metabolite produced by the cluster with a much higher yield compared to endocrocin. The sequence is that of Short chain dehydrogenase CPUR_05429 from Claviceps purpurea (strain 20.1) (Ergot fungus).